The primary structure comprises 337 residues: tRNA N6-adenosine threonylcarbamoyltransferase (337 aa).

Positions 111 and 115 each coordinate Fe cation. Residues 134–138 (LVSGG), Asp167, Gly180, and Asn272 each bind substrate. Residue Asp300 coordinates Fe cation.

This sequence belongs to the KAE1 / TsaD family. Fe(2+) serves as cofactor.

Its subcellular location is the cytoplasm. It carries out the reaction L-threonylcarbamoyladenylate + adenosine(37) in tRNA = N(6)-L-threonylcarbamoyladenosine(37) in tRNA + AMP + H(+). In terms of biological role, required for the formation of a threonylcarbamoyl group on adenosine at position 37 (t(6)A37) in tRNAs that read codons beginning with adenine. Is involved in the transfer of the threonylcarbamoyl moiety of threonylcarbamoyl-AMP (TC-AMP) to the N6 group of A37, together with TsaE and TsaB. TsaD likely plays a direct catalytic role in this reaction. The protein is tRNA N6-adenosine threonylcarbamoyltransferase of Escherichia coli O45:K1 (strain S88 / ExPEC).